The primary structure comprises 269 residues: 3'(2'),5'-bisphosphate nucleotidase CysQ (269 aa).

Residues E69, D89, L91, D92, and D216 each coordinate Mg(2+). E69 lines the substrate pocket. Substrate contacts are provided by residues 91 to 94 (LDGT) and D216.

It belongs to the inositol monophosphatase superfamily. CysQ family. Requires Mg(2+) as cofactor.

It localises to the cell inner membrane. It carries out the reaction adenosine 3',5'-bisphosphate + H2O = AMP + phosphate. In terms of biological role, converts adenosine-3',5'-bisphosphate (PAP) to AMP. The polypeptide is 3'(2'),5'-bisphosphate nucleotidase CysQ (Haemophilus influenzae (strain ATCC 51907 / DSM 11121 / KW20 / Rd)).